The primary structure comprises 429 residues: MVDFETAPINAPLAESDPAIARLIDQERDRQETHLELIASENFASSAVMAAQGSVLTNKYAEGLPNKRYYGGCEHVDAIEDLAIERAKELFGAAWANVQPHSGAQANFAVFLALLQPGDTIMGLDLSHGGHLTHGSPVNVSGKWFNVVQYGVDKETQRLDMEAIRQLALEHKPKLIVCGFSAYPRTIDFAAFRAIADEVGAYLLADMAHIAGLVAAGVHPSPVPHCDVVTTTTHKTLRGPRGGLILCRDAEFAKKFDKAVFPGSQGGPLEHVIAAKAVAFGEALRPAFKAYSQQVVANAQALADRLMARGIDVVSGGTDNHVVLLDLRSIGMTGKVADLLVSDVHITANKNTVPFDPESPFVTSGLRLGTAALTTRGFDADAFAEVAEVIADRLLNPEDDAIQARCLERVASLCRRFPLYAMATEPALV.

Residues Leu126 and 130-132 each bind (6S)-5,6,7,8-tetrahydrofolate; that span reads GHL. The residue at position 235 (Lys235) is an N6-(pyridoxal phosphate)lysine. 359 to 361 provides a ligand contact to (6S)-5,6,7,8-tetrahydrofolate; it reads SPF.

Belongs to the SHMT family. In terms of assembly, homodimer. Pyridoxal 5'-phosphate serves as cofactor.

The protein localises to the cytoplasm. It catalyses the reaction (6R)-5,10-methylene-5,6,7,8-tetrahydrofolate + glycine + H2O = (6S)-5,6,7,8-tetrahydrofolate + L-serine. It participates in one-carbon metabolism; tetrahydrofolate interconversion. It functions in the pathway amino-acid biosynthesis; glycine biosynthesis; glycine from L-serine: step 1/1. Functionally, catalyzes the reversible interconversion of serine and glycine with tetrahydrofolate (THF) serving as the one-carbon carrier. This reaction serves as the major source of one-carbon groups required for the biosynthesis of purines, thymidylate, methionine, and other important biomolecules. Also exhibits THF-independent aldolase activity toward beta-hydroxyamino acids, producing glycine and aldehydes, via a retro-aldol mechanism. This is Serine hydroxymethyltransferase from Synechococcus sp. (strain WH7803).